We begin with the raw amino-acid sequence, 873 residues long: Bifunctional heparan sulfate N-deacetylase/N-sulfotransferase 3 (873 aa).

At M1–R13 the chain is on the cytoplasmic side. A helical; Signal-anchor for type II membrane protein membrane pass occupies residues T14–Y34. At S35–R873 the chain is on the lumenal side. The segment at G36–E589 is heparan sulfate N-deacetylase 3. 4 N-linked (GlcNAc...) asparagine glycosylation sites follow: N146, N226, N342, and N392. Residues K590–R873 are heparan sulfate N-sulfotransferase 3. The active-site For sulfotransferase activity is the K605. Residue K605–T609 participates in 3'-phosphoadenylyl sulfate binding. A glycan (N-linked (GlcNAc...) asparagine) is linked at N658. S703 serves as a coordination point for 3'-phosphoadenylyl sulfate. N794 is a glycosylation site (N-linked (GlcNAc...) asparagine). C809 and C819 are joined by a disulfide. K824–Y828 contacts 3'-phosphoadenylyl sulfate.

This sequence belongs to the sulfotransferase 1 family. NDST subfamily. Monomer. Expressed in brain, kidney, liver, fetal and adult lung, adult pancreas, placenta, fetal spleen and fetal thymus. Not detected in adult/ fetal heart and skeletal muscle.

Its subcellular location is the golgi apparatus membrane. The catalysed reaction is alpha-D-glucosaminyl-[heparan sulfate](n) + 3'-phosphoadenylyl sulfate = N-sulfo-alpha-D-glucosaminyl-[heparan sulfate](n) + adenosine 3',5'-bisphosphate + 2 H(+). The protein operates within glycan metabolism; heparan sulfate biosynthesis. It functions in the pathway glycan metabolism; heparin biosynthesis. Its function is as follows. Essential bifunctional enzyme that catalyzes both the N-deacetylation and the N-sulfation of glucosamine (GlcNAc) of the glycosaminoglycan in heparan sulfate. Modifies the GlcNAc-GlcA disaccharide repeating sugar backbone to make N-sulfated heparosan, a prerequisite substrate for later modifications in heparin biosynthesis. Has high deacetylase activity but low sulfotransferase activity. The chain is Bifunctional heparan sulfate N-deacetylase/N-sulfotransferase 3 from Homo sapiens (Human).